We begin with the raw amino-acid sequence, 391 residues long: Phosphoglycerate kinase (391 aa).

Residues 21-23, R36, 59-62, R113, and R146 contribute to the substrate site; these read DLN and HLGR. ATP is bound by residues K197, E319, and 345-348; that span reads GGDT.

It belongs to the phosphoglycerate kinase family. As to quaternary structure, monomer.

The protein localises to the cytoplasm. It catalyses the reaction (2R)-3-phosphoglycerate + ATP = (2R)-3-phospho-glyceroyl phosphate + ADP. It participates in carbohydrate degradation; glycolysis; pyruvate from D-glyceraldehyde 3-phosphate: step 2/5. The polypeptide is Phosphoglycerate kinase (Shewanella sp. (strain MR-7)).